We begin with the raw amino-acid sequence, 126 residues long: Histone H2B type 1-L (126 aa).

Residues 1-12 (MPELAKSAPAPK) show a composition bias toward low complexity. Residues 1-36 (MPELAKSAPAPKKGSKKAVTKAQKKDGKKRKRSRKE) are disordered. Residue Pro-2 is modified to N-acetylproline. Glu-3 bears the ADP-ribosyl glutamic acid mark. The residue at position 6 (Lys-6) is an N6-(2-hydroxyisobutyryl)lysine; alternate. Position 6 is an N6-(beta-hydroxybutyryl)lysine; alternate (Lys-6). Lys-6 is modified (N6-acetyllysine; alternate). Residue Lys-6 is modified to N6-butyryllysine; alternate. Lys-6 carries the N6-crotonyllysine; alternate modification. Position 6 is an N6-lactoyllysine; alternate (Lys-6). Lys-6 is covalently cross-linked (Glycyl lysine isopeptide (Lys-Gly) (interchain with G-Cter in SUMO2); alternate). Position 7 is an ADP-ribosylserine (Ser-7). Lys-12 carries the N6-(beta-hydroxybutyryl)lysine; alternate modification. 2 positions are modified to N6-acetyllysine; alternate: Lys-12 and Lys-13. An N6-crotonyllysine; alternate mark is found at Lys-12 and Lys-13. N6-lactoyllysine; alternate is present on Lys-12. The residue at position 13 (Lys-13) is an N6-(2-hydroxyisobutyryl)lysine; alternate. A Phosphoserine; by STK4/MST1 modification is found at Ser-15. An N6-acetyllysine; alternate mark is found at Lys-16, Lys-17, Lys-21, and Lys-24. Lys-16, Lys-17, Lys-21, and Lys-24 each carry N6-crotonyllysine; alternate. Residues Lys-16, Lys-17, Lys-21, and Lys-24 each carry the N6-lactoyllysine; alternate modification. N6-(beta-hydroxybutyryl)lysine; alternate is present on residues Lys-17 and Lys-21. Position 17 is an N6-glutaryllysine; alternate (Lys-17). An N6-(2-hydroxyisobutyryl)lysine; alternate mark is found at Lys-21 and Lys-24. Lys-21 bears the N6-butyryllysine; alternate mark. Lys-21 participates in a covalent cross-link: Glycyl lysine isopeptide (Lys-Gly) (interchain with G-Cter in SUMO2); alternate. An N6-(2-hydroxyisobutyryl)lysine modification is found at Lys-25. Lys-35 carries the N6-(2-hydroxyisobutyryl)lysine; alternate modification. Residue Lys-35 is modified to N6-(beta-hydroxybutyryl)lysine; alternate. N6-crotonyllysine; alternate is present on Lys-35. An N6-glutaryllysine; alternate modification is found at Lys-35. Lys-35 bears the N6-succinyllysine; alternate mark. Residue Lys-35 forms a Glycyl lysine isopeptide (Lys-Gly) (interchain with G-Cter in ubiquitin); alternate linkage. PolyADP-ribosyl glutamic acid is present on Glu-36. Ser-37 carries the phosphoserine; by AMPK modification. N6-(2-hydroxyisobutyryl)lysine; alternate is present on residues Lys-44, Lys-47, and Lys-58. Lys-44 carries the N6-lactoyllysine; alternate modification. Lys-44 and Lys-47 each carry N6-glutaryllysine; alternate. Lys-47 is subject to N6-methyllysine; alternate. Residue Lys-58 is modified to N6,N6-dimethyllysine; alternate. At Arg-80 the chain carries Dimethylated arginine. Lys-86 is modified (N6-(2-hydroxyisobutyryl)lysine; alternate). At Lys-86 the chain carries N6-(beta-hydroxybutyryl)lysine; alternate. Lys-86 carries the N6-acetyllysine; alternate modification. Lys-86 carries the N6-lactoyllysine; alternate modification. Lys-86 bears the N6,N6,N6-trimethyllysine; alternate mark. Residues Arg-87 and Arg-93 each carry the omega-N-methylarginine modification. N6-(2-hydroxyisobutyryl)lysine; alternate is present on Lys-109. The residue at position 109 (Lys-109) is an N6-lactoyllysine; alternate. An N6-glutaryllysine; alternate modification is found at Lys-109. The residue at position 109 (Lys-109) is an N6-methyllysine; alternate. A glycan (O-linked (GlcNAc) serine) is linked at Ser-113. Thr-116 carries the phosphothreonine modification. N6-(2-hydroxyisobutyryl)lysine; alternate is present on residues Lys-117 and Lys-121. N6-(beta-hydroxybutyryl)lysine; alternate is present on residues Lys-117 and Lys-121. 2 positions are modified to N6-lactoyllysine; alternate: Lys-117 and Lys-121. N6-glutaryllysine; alternate occurs at positions 117 and 121. N6-succinyllysine; alternate occurs at positions 117 and 121. The residue at position 117 (Lys-117) is an N6-malonyllysine; alternate. An N6-methylated lysine; alternate modification is found at Lys-117. Lys-121 participates in a covalent cross-link: Glycyl lysine isopeptide (Lys-Gly) (interchain with G-Cter in ubiquitin); alternate.

The protein belongs to the histone H2B family. As to quaternary structure, the nucleosome is a histone octamer containing two molecules each of H2A, H2B, H3 and H4 assembled in one H3-H4 heterotetramer and two H2A-H2B heterodimers. The octamer wraps approximately 147 bp of DNA. In terms of processing, monoubiquitination at Lys-35 (H2BK34Ub) by the MSL1/MSL2 dimer is required for histone H3 'Lys-4' (H3K4me) and 'Lys-79' (H3K79me) methylation and transcription activation at specific gene loci, such as HOXA9 and MEIS1 loci. Similarly, monoubiquitination at Lys-121 (H2BK120Ub) by the RNF20/40 complex gives a specific tag for epigenetic transcriptional activation and is also prerequisite for histone H3 'Lys-4' and 'Lys-79' methylation. It also functions cooperatively with the FACT dimer to stimulate elongation by RNA polymerase II. H2BK120Ub also acts as a regulator of mRNA splicing: deubiquitination by USP49 is required for efficient cotranscriptional splicing of a large set of exons. Phosphorylation at Ser-37 (H2BS36ph) by AMPK in response to stress promotes transcription. Phosphorylated on Ser-15 (H2BS14ph) by STK4/MST1 during apoptosis; which facilitates apoptotic chromatin condensation. Also phosphorylated on Ser-15 in response to DNA double strand breaks (DSBs), and in correlation with somatic hypermutation and immunoglobulin class-switch recombination. Post-translationally, glcNAcylation at Ser-113 promotes monoubiquitination of Lys-121. It fluctuates in response to extracellular glucose, and associates with transcribed genes. In terms of processing, ADP-ribosylated by PARP1 or PARP2 on Ser-7 (H2BS6ADPr) in response to DNA damage. H2BS6ADPr promotes recruitment of CHD1L. Mono-ADP-ribosylated on Glu-3 (H2BE2ADPr) by PARP3 in response to single-strand breaks. Poly ADP-ribosylation on Glu-36 (H2BE35ADPr) by PARP1 regulates adipogenesis: it inhibits phosphorylation at Ser-37 (H2BS36ph), thereby blocking expression of pro-adipogenetic genes. Crotonylation (Kcr) is specifically present in male germ cells and marks testis-specific genes in post-meiotic cells, including X-linked genes that escape sex chromosome inactivation in haploid cells. Crotonylation marks active promoters and enhancers and confers resistance to transcriptional repressors. It is also associated with post-meiotically activated genes on autosomes. Post-translationally, lactylated in macrophages by EP300/P300 by using lactoyl-CoA directly derived from endogenous or exogenous lactate, leading to stimulates gene transcription.

It is found in the nucleus. Its subcellular location is the chromosome. Core component of nucleosome. Nucleosomes wrap and compact DNA into chromatin, limiting DNA accessibility to the cellular machineries which require DNA as a template. Histones thereby play a central role in transcription regulation, DNA repair, DNA replication and chromosomal stability. DNA accessibility is regulated via a complex set of post-translational modifications of histones, also called histone code, and nucleosome remodeling. This is Histone H2B type 1-L from Homo sapiens (Human).